Reading from the N-terminus, the 265-residue chain is 5'-nucleotidase SurE (265 aa).

Asp8, Asp9, Ser40, and Asn98 together coordinate a divalent metal cation.

This sequence belongs to the SurE nucleotidase family. It depends on a divalent metal cation as a cofactor.

The protein resides in the cytoplasm. The catalysed reaction is a ribonucleoside 5'-phosphate + H2O = a ribonucleoside + phosphate. Nucleotidase that shows phosphatase activity on nucleoside 5'-monophosphates. This chain is 5'-nucleotidase SurE, found in Thermosynechococcus vestitus (strain NIES-2133 / IAM M-273 / BP-1).